A 447-amino-acid polypeptide reads, in one-letter code: Chromosomal replication initiator protein DnaA (447 aa).

The tract at residues 1–70 (MQDFWSKAMD…EEILSEQLGE (70 aa)) is domain I, interacts with DnaA modulators. The interval 70–110 (EPVTLLFAADPALEKPVASKTQTVTPVQSGGETGDQENFHS) is domain II. Positions 87 to 109 (ASKTQTVTPVQSGGETGDQENFH) are disordered. Residues 88–99 (SKTQTVTPVQSG) are compositionally biased toward polar residues. A domain III, AAA+ region region spans residues 111–327 (GLDPRYTFDS…GALIRVSAYA (217 aa)). Positions 155, 157, 158, and 159 each coordinate ATP. Residues 328-447 (SLTGKPITMA…LASLKSMLQK (120 aa)) are domain IV, binds dsDNA.

The protein belongs to the DnaA family. In terms of assembly, oligomerizes as a right-handed, spiral filament on DNA at oriC.

Its subcellular location is the cytoplasm. Its function is as follows. Plays an essential role in the initiation and regulation of chromosomal replication. ATP-DnaA binds to the origin of replication (oriC) to initiate formation of the DNA replication initiation complex once per cell cycle. Binds the DnaA box (a 9 base pair repeat at the origin) and separates the double-stranded (ds)DNA. Forms a right-handed helical filament on oriC DNA; dsDNA binds to the exterior of the filament while single-stranded (ss)DNA is stabiized in the filament's interior. The ATP-DnaA-oriC complex binds and stabilizes one strand of the AT-rich DNA unwinding element (DUE), permitting loading of DNA polymerase. After initiation quickly degrades to an ADP-DnaA complex that is not apt for DNA replication. Binds acidic phospholipids. The protein is Chromosomal replication initiator protein DnaA of Magnetococcus marinus (strain ATCC BAA-1437 / JCM 17883 / MC-1).